A 426-amino-acid chain; its full sequence is Dihydroorotase (426 aa).

2 residues coordinate Zn(2+): histidine 61 and histidine 63. Residues 63 to 65 and asparagine 95 contribute to the substrate site; that span reads HCR. Residues glutamate 146, histidine 180, histidine 229, and aspartate 297 each coordinate Zn(2+). The active site involves aspartate 297. Histidine 301 is a binding site for substrate.

It belongs to the metallo-dependent hydrolases superfamily. DHOase family. Class I DHOase subfamily. It depends on Zn(2+) as a cofactor.

The catalysed reaction is (S)-dihydroorotate + H2O = N-carbamoyl-L-aspartate + H(+). The protein operates within pyrimidine metabolism; UMP biosynthesis via de novo pathway; (S)-dihydroorotate from bicarbonate: step 3/3. Catalyzes the reversible cyclization of carbamoyl aspartate to dihydroorotate. This chain is Dihydroorotase, found in Methanopyrus kandleri (strain AV19 / DSM 6324 / JCM 9639 / NBRC 100938).